The primary structure comprises 694 residues: E3 ubiquitin-protein ligase RNF169 (694 aa).

Composition is skewed to low complexity over residues 1–20 and 33–46; these read MAAA…AALS and AAKA…SSPA. Residues 1 to 46 are disordered; that stretch reads MAAAGPSTRASSAAAAAALSRRGRRGRCDEMAAAKAGAPGPASSPA. Ser-12 is subject to Phosphoserine. Residues 61 to 97 form an RING-type zinc finger; the sequence is CTGCLETPGEVAALPCSHSRCRGCASRAAGPGCRRCR. Positions 100–153 are disordered; sequence GSGWARRRARDDGQAAAELMGERARRGQPEPCRPRRDGGAAASGPRPEPEPLAE. Over residues 119–137 the composition is skewed to basic and acidic residues; that stretch reads MGERARRGQPEPCRPRRDG. Positions 192–200 match the UMI motif motif; the sequence is DDQIHKLLQ. Residues Ser-234 and Ser-236 each carry the phosphoserine modification. Residue Lys-273 forms a Glycyl lysine isopeptide (Lys-Gly) (interchain with G-Cter in SUMO2) linkage. Ser-326 carries the post-translational modification Phosphoserine. Residue Lys-349 forms a Glycyl lysine isopeptide (Lys-Gly) (interchain with G-Cter in SUMO2) linkage. Phosphoserine occurs at positions 390 and 396. Thr-397 carries the phosphothreonine modification. The residue at position 472 (Ser-472) is a Phosphoserine. Lys-498 is covalently cross-linked (Glycyl lysine isopeptide (Lys-Gly) (interchain with G-Cter in SUMO2)). The interval 515–537 is disordered; the sequence is TCHSSEHGGASSGPSLEREQCEE. The residue at position 541 (Thr-541) is a Phosphothreonine. Ser-630 bears the Phosphoserine mark. The MIU motif signature appears at 651-668; sequence QEEEDQQLALQSHRMFDS. The short motif at 675-687 is the LR motif element; sequence RRKGSVDQYLLRS. Ser-679 is modified (phosphoserine).

This sequence belongs to the RNF169 family. In terms of assembly, interacts with DYRK1B. Phosphorylated by DYRK1A; phosphorylation increases RNF169 ability to block accumulation of TP53BP1 at the DSB sites.

The protein localises to the chromosome. It is found in the nucleus. The protein resides in the nucleoplasm. It catalyses the reaction S-ubiquitinyl-[E2 ubiquitin-conjugating enzyme]-L-cysteine + [acceptor protein]-L-lysine = [E2 ubiquitin-conjugating enzyme]-L-cysteine + N(6)-ubiquitinyl-[acceptor protein]-L-lysine.. Its pathway is protein modification; protein ubiquitination. Functionally, probable E3 ubiquitin-protein ligase that acts as a regulator of double-strand breaks (DSBs) repair following DNA damage. Functions in a non-canonical fashion to harness RNF168-mediated protein recruitment to DSB-containing chromatin, thereby contributing to regulation of DSB repair pathway utilization. Once recruited to DSB repair sites by recognizing and binding ubiquitin catalyzed by RNF168, competes with TP53BP1 and BRCA1 for association with RNF168-modified chromatin, thereby favouring homologous recombination repair (HRR) and single-strand annealing (SSA) instead of non-homologous end joining (NHEJ) mediated by TP53BP1. E3 ubiquitin-protein ligase activity is not required for regulation of DSBs repair. The polypeptide is E3 ubiquitin-protein ligase RNF169 (Rnf169) (Mus musculus (Mouse)).